A 707-amino-acid polypeptide reads, in one-letter code: B-cell lymphoma 6 protein homolog (707 aa).

One can recognise a BTB domain in the interval 32 to 99 (TDVVIVVSRE…MYTSRLNLRE (68 aa)). The segment at 275–350 (HYSVPEGPKP…QPNSPTESCS (76 aa)) is disordered. Basic and acidic residues predominate over residues 299-315 (KASKEEERPSSEDEIAL). The span at 331–350 (SPQSPQKSDCQPNSPTESCS) shows a compositional bias: polar residues. Position 334 is a phosphoserine (Ser-334). Phosphoserine; by MAPK1 is present on Ser-344. Phosphoserine is present on Ser-362. Residues 377–380 (KKYK) are required for interaction with NuRD complex and for transcriptional repressor activity. Residue Lys-380 is modified to N6-acetyllysine; by EP300. Ser-405 is modified (phosphoserine). Residues 405-469 (SPRAYPAPPA…RSSSESHSPL (65 aa)) are disordered. The segment covering 409-420 (YPAPPACQPPME) has biased composition (pro residues). Positions 425–452 (DLQSPTKLSASGEDSTIPQASRLNNLVN) are enriched in polar residues. A compositionally biased stretch (low complexity) spans 458–467 (SPRSSSESHS). 6 consecutive C2H2-type zinc fingers follow at residues 519–542 (FFCNECDCRFSEEASLKRHTLQTH), 547–569 (YKCDRCQASFRYKGNLASHKTVH), 575–597 (YRCNICGAQFNRPANLKTHTRIH), 603–625 (YKCETCGARFVQVAHLRAHVLIH), 631–653 (YPCEICGTRFRHLQTLKSHLRIH), and 659–682 (YHCEKCNLHFRHKSQLRLHLRQKH).

Homodimer. Interacts (via BTB domain) with the corepressors BCOR, NCOR1 and SMRT/NCOR2; the interactions are direct. Forms preferably ternary complexes with BCOR and SMRT/NCOR2 on target gene promoters but, on enhancer elements, interacts with SMRT/NCOR2 and HDAC3 to repress proximal gene expression. Interacts with histone deacetylases HDAC2, HDAC5 and HDAC9 (via the catalytic domain). Interacts with ZBTB7 and BCL6B. Interacts with SCF(FBXO11) complex; the interaction is independent of phosphorylation and promotes ubiquitination. Interacts (when phosphorylated) with PIN1; the interaction is required for BCL6 degradation upon genotoxic stress. Interacts with ZBTB17; inhibits ZBTB17 transcriptional activity. Interacts with CTBP1, autoinhibits its transcriptional expression. Interacts with NOTCH1 NCID and SIRT1; leads to a epigenetic repression of selective NOTCH1-target genes. Interacts (nor via BTB domain neither acetylated) with the NuRD complex components CHD4, HDAC1, MBD3 and MTA3; the interaction with MTA3 inhibits BCL6 acetylation and is required for BCL6 transpriptional repression. Post-translationally, phosphorylated by MAPK1 in response to antigen receptor activation at Ser-334 and Ser-344. Phosphorylated by ATM in response to genotoxic stress. Phosphorylation induces its degradation by ubiquitin/proteasome pathway. Polyubiquitinated. Polyubiquitinated by SCF(FBXO11), leading to its degradation by the proteasome. Ubiquitinated by the SCF(FBXL17) complex, leading to its degradation by the proteasome: ubiquitination by the SCF(FBXL17) complex takes place when aberrant BTB domain dimers are formed. In terms of processing, acetylated at Lys-380 by EP300 which inhibits the interaction with NuRD complex and the transcriptional repressor function. Deacetylated by HDAC- and SIR2-dependent pathways. In terms of tissue distribution, expressed at least in germinal center B-cells of spleen.

It is found in the nucleus. Transcriptional repressor mainly required for germinal center (GC) formation and antibody affinity maturation which has different mechanisms of action specific to the lineage and biological functions. Forms complexes with different corepressors and histone deacetylases to repress the transcriptional expression of different subsets of target genes. Represses its target genes by binding directly to the DNA sequence 5'-TTCCTAGAA-3' (BCL6-binding site) or indirectly by repressing the transcriptional activity of transcription factors. In GC B-cells, represses genes that function in differentiation, inflammation, apoptosis and cell cycle control, also autoregulates its transcriptional expression and up-regulates, indirectly, the expression of some genes important for GC reactions, such as AICDA, through the repression of microRNAs expression, like miR155. An important function is to allow GC B-cells to proliferate very rapidly in response to T-cell dependent antigens and tolerate the physiological DNA breaks required for immunglobulin class switch recombination and somatic hypermutation without inducing a p53/TP53-dependent apoptotic response. In follicular helper CD4(+) T-cells (T(FH) cells), promotes the expression of T(FH)-related genes but inhibits the differentiation of T(H)1, T(H)2 and T(H)17 cells. Also required for the establishment and maintenance of immunological memory for both T- and B-cells. Suppresses macrophage proliferation through competition with STAT5 for STAT-binding motifs binding on certain target genes, such as CCL2 and CCND2. In response to genotoxic stress, controls cell cycle arrest in GC B-cells in both p53/TP53-dependedent and -independent manners. Besides, also controls neurogenesis through the alteration of the composition of NOTCH-dependent transcriptional complexes at selective NOTCH targets, such as HES5, including the recruitment of the deacetylase SIRT1 and resulting in an epigenetic silencing leading to neuronal differentiation. This Mus musculus (Mouse) protein is B-cell lymphoma 6 protein homolog (Bcl6).